The chain runs to 587 residues: Proteasome-associated ATPase (587 aa).

Residues 1 to 94 (MAARDDAEAR…KEEVDRLAQP (94 aa)) adopt a coiled-coil conformation. Residue 276–281 (GCGKTL) coordinates ATP. Residues 586 to 587 (YL) form a docks into pockets in the proteasome alpha-ring region.

This sequence belongs to the AAA ATPase family. As to quaternary structure, homohexamer. Assembles into a hexameric ring structure that caps the 20S proteasome core. Strongly interacts with the prokaryotic ubiquitin-like protein Pup through a hydrophobic interface; the interacting region of ARC lies in its N-terminal coiled-coil domain. There is one Pup binding site per ARC hexamer ring. Upon ATP-binding, the C-terminus of ARC interacts with the alpha-rings of the proteasome core, possibly by binding to the intersubunit pockets.

Its pathway is protein degradation; proteasomal Pup-dependent pathway. Functionally, ATPase which is responsible for recognizing, binding, unfolding and translocation of pupylated proteins into the bacterial 20S proteasome core particle. May be essential for opening the gate of the 20S proteasome via an interaction with its C-terminus, thereby allowing substrate entry and access to the site of proteolysis. Thus, the C-termini of the proteasomal ATPase may function like a 'key in a lock' to induce gate opening and therefore regulate proteolysis. The sequence is that of Proteasome-associated ATPase from Streptosporangium roseum (strain ATCC 12428 / DSM 43021 / JCM 3005 / KCTC 9067 / NCIMB 10171 / NRRL 2505 / NI 9100).